A 104-amino-acid chain; its full sequence is ATP-dependent Clp protease adapter protein ClpS (104 aa).

It belongs to the ClpS family. In terms of assembly, binds to the N-terminal domain of the chaperone ClpA.

In terms of biological role, involved in the modulation of the specificity of the ClpAP-mediated ATP-dependent protein degradation. The sequence is that of ATP-dependent Clp protease adapter protein ClpS from Bordetella avium (strain 197N).